Reading from the N-terminus, the 100-residue chain is Small ribosomal subunit protein uS14c (100 aa).

Belongs to the universal ribosomal protein uS14 family. In terms of assembly, part of the 30S ribosomal subunit.

The protein resides in the plastid. It localises to the chloroplast. Its function is as follows. Binds 16S rRNA, required for the assembly of 30S particles. The protein is Small ribosomal subunit protein uS14c of Olimarabidopsis pumila (Dwarf rocket).